The primary structure comprises 346 residues: Protein RecA (346 aa).

64 to 71 (GPESSGKT) is an ATP binding site.

The protein belongs to the RecA family.

It is found in the cytoplasm. Functionally, can catalyze the hydrolysis of ATP in the presence of single-stranded DNA, the ATP-dependent uptake of single-stranded DNA by duplex DNA, and the ATP-dependent hybridization of homologous single-stranded DNAs. It interacts with LexA causing its activation and leading to its autocatalytic cleavage. The polypeptide is Protein RecA (Bacillus pumilus (strain SAFR-032)).